The following is a 570-amino-acid chain: Hydroxylamine reductase (570 aa).

[4Fe-4S] cluster is bound by residues cysteine 5, cysteine 8, cysteine 17, and cysteine 23. Histidine 266, glutamate 290, cysteine 334, cysteine 425, cysteine 453, cysteine 478, glutamate 513, and lysine 515 together coordinate hybrid [4Fe-2O-2S] cluster. Cysteine 425 is subject to Cysteine persulfide.

It belongs to the HCP family. [4Fe-4S] cluster serves as cofactor. It depends on hybrid [4Fe-2O-2S] cluster as a cofactor.

The protein resides in the cytoplasm. The enzyme catalyses A + NH4(+) + H2O = hydroxylamine + AH2 + H(+). Catalyzes the reduction of hydroxylamine to form NH(3) and H(2)O. This Clostridium botulinum (strain Loch Maree / Type A3) protein is Hydroxylamine reductase.